The following is a 1381-amino-acid chain: Hepatocyte growth factor receptor (1381 aa).

A signal peptide spans 1-24; the sequence is MKAPTVLTPGILVLLFILVQRSNG. Topologically, residues 25-932 are extracellular; the sequence is ECKEALTKSE…VIVQPDQNFT (908 aa). One can recognise a Sema domain in the interval 27-515; sequence KEALTKSEMN…TGKKITKIPL (489 aa). The N-linked (GlcNAc...) asparagine glycan is linked to Asn-45. Cystine bridges form between Cys-95/Cys-101, Cys-98/Cys-160, Cys-133/Cys-141, and Cys-172/Cys-175. A glycan (N-linked (GlcNAc...) asparagine) is linked at Asn-106. Asn-149 carries an N-linked (GlcNAc...) asparagine glycan. Asn-202 carries an N-linked (GlcNAc...) asparagine glycan. Intrachain disulfides connect Cys-298-Cys-363 and Cys-385-Cys-397. A glycan (N-linked (GlcNAc...) asparagine) is linked at Asn-399. 4 cysteine pairs are disulfide-bonded: Cys-520–Cys-538, Cys-526–Cys-561, Cys-529–Cys-545, and Cys-541–Cys-551. 3 IPT/TIG domains span residues 563 to 655, 657 to 739, and 742 to 836; these read PTIY…FSYV, PIIT…FSYR, and PIVY…LIYV. Thr-582 carries O-linked (Man) threonine glycosylation. Residues Asn-607 and Asn-635 are each glycosylated (N-linked (GlcNAc...) asparagine). Residues Thr-676 and Thr-761 are each glycosylated (O-linked (Man) threonine). N-linked (GlcNAc...) asparagine glycans are attached at residues Asn-785, Asn-879, and Asn-930. A helical transmembrane segment spans residues 933–955; it reads GLIAGVVSISIALLLLLGLFLWL. Topologically, residues 956 to 1381 are cytoplasmic; sequence KKRKQIKDLG…QDNADGEVDT (426 aa). The residue at position 966 (Ser-966) is a Phosphoserine. Thr-977 carries the phosphothreonine modification. Phosphoserine occurs at positions 990, 997, and 1000. Phosphotyrosine is present on Tyr-1003. Residues 1078-1345 enclose the Protein kinase domain; that stretch reads VHFNEVIGRG…RISAIFSAFI (268 aa). ATP contacts are provided by residues 1084–1092 and Lys-1110; that span reads IGRGHFGCV. Residue Asp-1204 is the Proton acceptor of the active site. An interaction with RANBP9 region spans residues 1212–1381; sequence LDEKFTVKVA…QDNADGEVDT (170 aa). A Phosphotyrosine modification is found at Tyr-1230. Phosphotyrosine; by autocatalysis is present on residues Tyr-1234 and Tyr-1235. Residue Thr-1289 is modified to Phosphothreonine. The segment at 1320 to 1359 is interaction with MUC20; that stretch reads WHPKAEMRPSFSELVSRISAIFSAFIGEHYVHVNATYVNV. Tyr-1349 and Tyr-1356 each carry phosphotyrosine; by autocatalysis. Tyr-1365 carries the post-translational modification Phosphotyrosine.

This sequence belongs to the protein kinase superfamily. Tyr protein kinase family. As to quaternary structure, heterodimer made of an alpha chain (50 kDa) and a beta chain (145 kDa) which are disulfide linked. Binds PLXNB1. Interacts when phosphorylated with downstream effectors including STAT3, PIK3R1, SRC, PCLG1, GRB2 and GAB1. Interacts with SPSB1, SPSB2 and SPSB4. Interacts with INPP5D/SHIP1. When phosphorylated at Tyr-1356, interacts with INPPL1/SHIP2. Interacts with RANBP9 and RANBP10, as well as SPSB1, SPSB2, SPSB3 and SPSB4. SPSB1 binding occurs in the presence and in the absence of HGF, however HGF treatment has a positive effect on this interaction. Interacts with MUC20; prevents interaction with GRB2 and suppresses hepatocyte growth factor-induced cell proliferation. Interacts with GRB10. Interacts with PTPN1 and PTPN2. Interacts with tensin TNS3. Interacts (when phosphorylated) with tensin TNS4 (via SH2 domain); the interaction increases MET protein stability by inhibiting MET endocytosis and subsequent lysosomal degradation. Autophosphorylated in response to ligand binding on Tyr-1234 and Tyr-1235 in the kinase domain leading to further phosphorylation of Tyr-1349 and Tyr-1356 in the C-terminal multifunctional docking site. Dephosphorylated by PTPRJ at Tyr-1349 and Tyr-1365. Dephosphorylated by PTPN1 and PTPN2. In terms of processing, ubiquitinated. Ubiquitination by CBL regulates the receptor stability and activity through proteasomal degradation. Post-translationally, O-mannosylation of IPT/TIG domains by TMEM260 is required for protein maturation. O-mannosylated residues are composed of single mannose glycans that are not elongated or modified.

The protein localises to the membrane. It carries out the reaction L-tyrosyl-[protein] + ATP = O-phospho-L-tyrosyl-[protein] + ADP + H(+). With respect to regulation, in its inactive state, the C-terminal tail interacts with the catalytic domain and inhibits the kinase activity. Upon ligand binding, the C-terminal tail is displaced and becomes phosphorylated, thus increasing the kinase activity. Receptor tyrosine kinase that transduces signals from the extracellular matrix into the cytoplasm by binding to hepatocyte growth factor/HGF ligand. Regulates many physiological processes including proliferation, scattering, morphogenesis and survival. Ligand binding at the cell surface induces autophosphorylation of MET on its intracellular domain that provides docking sites for downstream signaling molecules. Following activation by ligand, interacts with the PI3-kinase subunit PIK3R1, PLCG1, SRC, GRB2, STAT3 or the adapter GAB1. Recruitment of these downstream effectors by MET leads to the activation of several signaling cascades including the RAS-ERK, PI3 kinase-AKT, or PLCgamma-PKC. The RAS-ERK activation is associated with the morphogenetic effects while PI3K/AKT coordinates prosurvival effects. During embryonic development, MET signaling plays a role in gastrulation, development and migration of muscles and neuronal precursors, angiogenesis and kidney formation. In adults, participates in wound healing as well as organ regeneration and tissue remodeling. Also promotes differentiation and proliferation of hematopoietic cells. This Ateles geoffroyi (Black-handed spider monkey) protein is Hepatocyte growth factor receptor (MET).